A 265-amino-acid chain; its full sequence is Novel plant SNARE 12 (265 aa).

The Cytoplasmic segment spans residues 1–217; sequence MASELPMSPH…IGRQVATDKC (217 aa). A coiled-coil region spans residues 32–106; that stretch reads LDKIKDSSRQ…ALRKTYLNTL (75 aa). At Ser-74 the chain carries Phosphoserine. One can recognise a t-SNARE coiled-coil homology domain in the interval 146 to 208; the sequence is MKRMDETDQA…KKASQLVKEI (63 aa). A helical; Anchor for type IV membrane protein transmembrane segment spans residues 218–238; it reads IMAFLFLIVCGVIAIIIVKIV. At 239-265 the chain is on the vesicular side; the sequence is NPNNKDIRDIPGLAPPAQSRKLLYFRE.

It belongs to the novel plant SNARE family. As to expression, expressed in roots, stems, flower, siliques and leaves.

It is found in the membrane. Functionally, vesicle trafficking protein that functions in the secretory pathway. The sequence is that of Novel plant SNARE 12 (NPSN12) from Arabidopsis thaliana (Mouse-ear cress).